Here is a 644-residue protein sequence, read N- to C-terminus: Forkhead box protein O (644 aa).

Positions 39-75 are disordered; it reads FEPQTRARSNTWPCPRPENFVEPPDELDSTKASNQQL. Position 49 is a phosphothreonine; by PKB/AKT1 (T49). S80 bears the Phosphoserine mark. A DNA-binding region (fork-head) is located at residues 100–206; it reads WGNLSYADLI…ETSRYEKRRG (107 aa). Disordered stretches follow at residues 187–210, 222–276, 329–386, 412–435, and 578–612; these read KSVR…RAKK, GLND…SPIR, QQQQ…QTLQ, SPNS…DSLN, and QQHL…NSSL. At S195 the chain carries Phosphoserine; by PKB/AKT1. Composition is skewed to polar residues over residues 226–235 and 261–270; these read ATPSPSSSVS and RASSNASSCG. Position 264 is a phosphoserine; by PKB/AKT1 (S264). Phosphoserine is present on residues S267, S268, and S273. The segment covering 329 to 340 has biased composition (low complexity); sequence QQQQQQQQQQQQ. Residues 350-359 show a composition bias toward pro residues; that stretch reads SQPPPPPYQP. Residues 360-374 show a composition bias toward low complexity; the sequence is PQLQQQQQQQPSYSL. Residues 412 to 421 show a composition bias toward polar residues; it reads SPNSVTTTMS.

In terms of assembly, interacts with melt.

The protein resides in the cytoplasm. The protein localises to the nucleus. In terms of biological role, transcription factor involved in the regulation of the insulin signaling pathway. Consistently activates both the downstream target Thor\d4EBP and the feedback control target InR. Involved in negative regulation of the cell cycle, modulating cell growth and proliferation. In response to cellular stresses, such as nutrient deprivation or increased levels of reactive oxygen species, foxo is activated and inhibits growth through the action of target genes such as Thor. Foxo activated in the adult fat body can regulate lifespan in adults; an insulin peptide itself may function as one secondary messenger of insulin-regulated aging. Also regulates Lip4, homolog of human acid lipases, thereby acting as a key modulator of lipid metabolism by insulin signaling and integrates insulin responses to glucose and lipid homeostasis. The protein is Forkhead box protein O of Drosophila pseudoobscura pseudoobscura (Fruit fly).